Here is a 75-residue protein sequence, read N- to C-terminus: Putative membrane protein insertion efficiency factor (75 aa).

It belongs to the UPF0161 family.

It is found in the cell membrane. Could be involved in insertion of integral membrane proteins into the membrane. The polypeptide is Putative membrane protein insertion efficiency factor (ytjA) (Bacillus subtilis (strain 168)).